A 269-amino-acid polypeptide reads, in one-letter code: Cytochrome c oxidase subunit 3 (269 aa).

7 consecutive transmembrane segments (helical) span residues 24–44, 46–66, 90–110, 132–152, 167–187, 207–227, and 247–267; these read FYNSLSLFILTTSGVLTMHGF, NMYIILFIAFINLVWCMTLWF, GVGLFIASEALFFLAIFWTFF, IDPFELPLLNNIILLSSGVTV, ALYGLVATILLAIVFTIFQGI, FSTGFHGFHVLIGTAFLSVGL, and ILYWHFVDVVWLILYVCIYFW.

Belongs to the cytochrome c oxidase subunit 3 family. Component of the cytochrome c oxidase (complex IV, CIV), a multisubunit enzyme composed of a catalytic core of 3 subunits and several supernumerary subunits. The complex exists as a monomer or a dimer and forms supercomplexes (SCs) in the inner mitochondrial membrane with ubiquinol-cytochrome c oxidoreductase (cytochrome b-c1 complex, complex III, CIII).

The protein localises to the mitochondrion inner membrane. It carries out the reaction 4 Fe(II)-[cytochrome c] + O2 + 8 H(+)(in) = 4 Fe(III)-[cytochrome c] + 2 H2O + 4 H(+)(out). Functionally, component of the cytochrome c oxidase, the last enzyme in the mitochondrial electron transport chain which drives oxidative phosphorylation. The respiratory chain contains 3 multisubunit complexes succinate dehydrogenase (complex II, CII), ubiquinol-cytochrome c oxidoreductase (cytochrome b-c1 complex, complex III, CIII) and cytochrome c oxidase (complex IV, CIV), that cooperate to transfer electrons derived from NADH and succinate to molecular oxygen, creating an electrochemical gradient over the inner membrane that drives transmembrane transport and the ATP synthase. Cytochrome c oxidase is the component of the respiratory chain that catalyzes the reduction of oxygen to water. Electrons originating from reduced cytochrome c in the intermembrane space (IMS) are transferred via the dinuclear copper A center (CU(A)) of subunit 2 and heme A of subunit 1 to the active site in subunit 1, a binuclear center (BNC) formed by heme A3 and copper B (CU(B)). The BNC reduces molecular oxygen to 2 water molecules using 4 electrons from cytochrome c in the IMS and 4 protons from the mitochondrial matrix. The protein is Cytochrome c oxidase subunit 3 (COXIII) of Trichophyton rubrum (Athlete's foot fungus).